Here is a 90-residue protein sequence, read N- to C-terminus: Phosphoribosyl-ATP pyrophosphatase (90 aa).

This sequence belongs to the PRA-PH family.

It is found in the cytoplasm. The catalysed reaction is 1-(5-phospho-beta-D-ribosyl)-ATP + H2O = 1-(5-phospho-beta-D-ribosyl)-5'-AMP + diphosphate + H(+). The protein operates within amino-acid biosynthesis; L-histidine biosynthesis; L-histidine from 5-phospho-alpha-D-ribose 1-diphosphate: step 2/9. The chain is Phosphoribosyl-ATP pyrophosphatase from Streptomyces avermitilis (strain ATCC 31267 / DSM 46492 / JCM 5070 / NBRC 14893 / NCIMB 12804 / NRRL 8165 / MA-4680).